Consider the following 278-residue polypeptide: Putative cysteine-rich repeat secretory protein 17 (278 aa).

The first 32 residues, 1–32 (MYSLSSVSKHLILVHILALVATQLLLIRSVSS), serve as a signal peptide directing secretion. Gnk2-homologous domains are found at residues 39–142 (YLNH…SIDN) and 148–265 (YGDS…LYPF).

This sequence belongs to the cysteine-rich repeat secretory protein family.

It is found in the secreted. This chain is Putative cysteine-rich repeat secretory protein 17 (CRRSP17), found in Arabidopsis thaliana (Mouse-ear cress).